The chain runs to 271 residues: Probable diacyglycerol O-acyltransferase tgs3 (271 aa).

The protein belongs to the long-chain O-acyltransferase family.

It carries out the reaction an acyl-CoA + a 1,2-diacyl-sn-glycerol = a triacyl-sn-glycerol + CoA. It participates in glycerolipid metabolism; triacylglycerol biosynthesis. Its function is as follows. Catalyzes the terminal and only committed step in triacylglycerol synthesis by using diacylglycerol and fatty acyl CoA as substrates. Required for storage lipid synthesis. This Mycobacterium tuberculosis (strain CDC 1551 / Oshkosh) protein is Probable diacyglycerol O-acyltransferase tgs3 (tgs3).